Consider the following 82-residue polypeptide: uncharacterized protein (82 aa).

This is an uncharacterized protein from Ictaluridae (bullhead catfishes).